Here is a 960-residue protein sequence, read N- to C-terminus: Endosome/lysosome-associated apoptosis and autophagy regulator family member 2 (960 aa).

A disordered region spans residues 1–26 (MLFLRPGPARGRGRGRPARAPHSGLS). The signal sequence occupies residues 1 to 44 (MLFLRPGPARGRGRGRPARAPHSGLSPPWSPAWICCWALAGCQA). Over 45 to 860 (AWAGAGDLPS…TCETVDFWLK (816 aa)) the chain is Extracellular. N171 is a glycosylation site (N-linked (GlcNAc...) asparagine). Disulfide bonds link C295–C312, C325–C348, and C328–C360. 2 N-linked (GlcNAc...) asparagine glycosylation sites follow: N407 and N622. The MRH domain maps to 597–808 (PTCPYIRSMA…LWESVEACPL (212 aa)). Intrachain disulfides connect C599–C651, C661–C689, C758–C794, and C770–C806. A helical membrane pass occupies residues 861–881 (VGAGVGAFTAVLLVALTCYFW). The Cytoplasmic portion of the chain corresponds to 882-960 (KKNQKLEYKY…QLKSSRSPNI (79 aa)). The residue at position 949 (S949) is a Phosphoserine.

This sequence belongs to the ELAPOR family.

It is found in the cell membrane. In terms of biological role, functions as a regulator of the BMP signaling pathway and may be involved in epidermal differentiation. This is Endosome/lysosome-associated apoptosis and autophagy regulator family member 2 from Bos taurus (Bovine).